A 712-amino-acid polypeptide reads, in one-letter code: T-box transcription factor TBX2 (712 aa).

Residues 109–287 constitute a DNA-binding region (T-box); the sequence is LEAKELWDQF…NNPFAKGFRD (179 aa). The interval 313–450 is disordered; it reads PERDGAESDA…EGKEQGLAPL (138 aa). Residues 326 to 336 are compositionally biased toward pro residues; sequence DPPPAREPPTS. Phosphoserine occurs at positions 336, 342, and 360. 3 stretches are compositionally biased toward basic and acidic residues: residues 363 to 372, 391 to 409, and 421 to 444; these read EPERLSEERA, TEPE…KEPA, and SLEK…EGKE. The tract at residues 518–601 is repression domain 1 (RD1); sequence GGNGGGGGPG…ATSAAAAAAA (84 aa). Phosphoserine is present on residues serine 622, serine 653, serine 657, and serine 676. Residues 637-687 form a disordered region; sequence LTTGLASEGSKAAGGNSREPSPLPELALRKVGAPSRGALSPSGSAKEAANE.

In terms of assembly, binds DNA as a monomer. Interacts with PML (isoform PML-2, isoform PML-3 and isoform PML-4). As to expression, expressed primarily in adult in kidney, lung, and placenta. Weak expression in heart and ovary.

The protein localises to the nucleus. Its function is as follows. Transcription factor which acts as a transcriptional repressor. May also function as a transcriptional activator. Binds to the palindromic T site 5'-TTCACACCTAGGTGTGAA-3' DNA sequence, or a half-site, which are present in the regulatory region of several genes. Required for cardiac atrioventricular canal formation. May cooperate with NKX2.5 to negatively modulate expression of NPPA/ANF in the atrioventricular canal. May play a role as a positive regulator of TGFB2 expression, perhaps acting in concert with GATA4 in the developing outflow tract myocardium. Plays a role in limb pattern formation. Acts as a transcriptional repressor of ADAM10 gene expression, perhaps in concert with histone deacetylase HDAC1 as cofactor. Involved in branching morphogenesis in both developing lungs and adult mammary glands, via negative modulation of target genes; acting redundantly with TBX3. Required, together with TBX3, to maintain cell proliferation in the embryonic lung mesenchyme; perhaps acting downstream of SHH, BMP and TGFbeta signaling. Involved in modulating early inner ear development, acting independently of, and also redundantly with TBX3, in different subregions of the developing ear. Acts as a negative regulator of PML function in cellular senescence. Acts as a negative regulator of expression of CDKN1A/p21, IL33 and CCN4; repression of CDKN1A is enhanced in response to UV-induced stress, perhaps as a result of phosphorylation by p38 MAPK. Negatively modulates expression of CDKN2A/p14ARF and CDH1/E-cadherin. Plays a role in induction of the epithelial-mesenchymal transition (EMT). Plays a role in melanocyte proliferation, perhaps via regulation of cyclin CCND1. Involved in melanogenesis, acting via negative modulation of expression of DHICA oxidase/TYRP1 and P protein/OCA2. Involved in regulating retinal pigment epithelium (RPE) cell proliferation, perhaps via negatively modulating transcription of the transcription factor CEBPD. The sequence is that of T-box transcription factor TBX2 (TBX2) from Homo sapiens (Human).